Consider the following 172-residue polypeptide: Ribosome maturation factor RimM (172 aa).

The PRC barrel domain occupies Asp-96–Leu-168.

It belongs to the RimM family. In terms of assembly, binds ribosomal protein uS19.

It localises to the cytoplasm. Its function is as follows. An accessory protein needed during the final step in the assembly of 30S ribosomal subunit, possibly for assembly of the head region. Essential for efficient processing of 16S rRNA. May be needed both before and after RbfA during the maturation of 16S rRNA. It has affinity for free ribosomal 30S subunits but not for 70S ribosomes. This is Ribosome maturation factor RimM from Streptococcus thermophilus (strain ATCC BAA-491 / LMD-9).